The chain runs to 62 residues: Large ribosomal subunit protein bL28 (62 aa).

The segment at 1 to 22 (MAKKCAISGKGPMSGNNVSHAK) is disordered.

The protein belongs to the bacterial ribosomal protein bL28 family.

In Sulfurimonas denitrificans (strain ATCC 33889 / DSM 1251) (Thiomicrospira denitrificans (strain ATCC 33889 / DSM 1251)), this protein is Large ribosomal subunit protein bL28.